The chain runs to 257 residues: Large ribosomal subunit protein uL2 (257 aa).

Residues 210–231 are disordered; the sequence is PHGGGNHQHIGKASTVKRGTSA.

The protein belongs to the universal ribosomal protein uL2 family.

Its subcellular location is the cytoplasm. This chain is Large ribosomal subunit protein uL2 (RpL8), found in Mamestra brassicae (Cabbage moth).